The primary structure comprises 118 residues: Small ribosomal subunit protein uS13 (118 aa).

The segment at glycine 99–lysine 118 is disordered.

Belongs to the universal ribosomal protein uS13 family. As to quaternary structure, part of the 30S ribosomal subunit. Forms a loose heterodimer with protein S19. Forms two bridges to the 50S subunit in the 70S ribosome.

In terms of biological role, located at the top of the head of the 30S subunit, it contacts several helices of the 16S rRNA. In the 70S ribosome it contacts the 23S rRNA (bridge B1a) and protein L5 of the 50S subunit (bridge B1b), connecting the 2 subunits; these bridges are implicated in subunit movement. Contacts the tRNAs in the A and P-sites. This is Small ribosomal subunit protein uS13 from Xylella fastidiosa (strain M12).